We begin with the raw amino-acid sequence, 130 residues long: uncharacterized protein (130 aa).

The disordered stretch occupies residues 1–100 (MSSNSDNTEC…AEPDAAKEEP (100 aa)). Composition is skewed to basic and acidic residues over residues 57–75 (YTTRSKYESDVSEFKKMMD) and 91–100 (AEPDAAKEEP).

This is an uncharacterized protein from Equine herpesvirus 1 (strain Ab4p) (EHV-1).